A 117-amino-acid chain; its full sequence is Immunoglobulin heavy variable 4-4 (117 aa).

Positions Met1 to Ser19 are cleaved as a signal peptide. A framework-1 region spans residues Gln20–Ser44. Positions Gln20–Arg117 constitute an Ig-like domain. Cys41 and Cys115 form a disulfide bridge. A complementarity-determining-1 region spans residues Gly45 to Trp53. The framework-2 stretch occupies residues Trp54–Glu70. The tract at residues Ile71–Thr77 is complementarity-determining-2. A framework-3 region spans residues Asn78–Cys115. Residues Ala116 to Arg117 are complementarity-determining-3.

In terms of assembly, immunoglobulins are composed of two identical heavy chains and two identical light chains; disulfide-linked.

The protein resides in the secreted. Its subcellular location is the cell membrane. Functionally, v region of the variable domain of immunoglobulin heavy chains that participates in the antigen recognition. Immunoglobulins, also known as antibodies, are membrane-bound or secreted glycoproteins produced by B lymphocytes. In the recognition phase of humoral immunity, the membrane-bound immunoglobulins serve as receptors which, upon binding of a specific antigen, trigger the clonal expansion and differentiation of B lymphocytes into immunoglobulins-secreting plasma cells. Secreted immunoglobulins mediate the effector phase of humoral immunity, which results in the elimination of bound antigens. The antigen binding site is formed by the variable domain of one heavy chain, together with that of its associated light chain. Thus, each immunoglobulin has two antigen binding sites with remarkable affinity for a particular antigen. The variable domains are assembled by a process called V-(D)-J rearrangement and can then be subjected to somatic hypermutations which, after exposure to antigen and selection, allow affinity maturation for a particular antigen. This Homo sapiens (Human) protein is Immunoglobulin heavy variable 4-4.